We begin with the raw amino-acid sequence, 126 residues long: MLCPALLCAALLLLTPVEITDARALQQPSDAAQFMEQFLESYNDLLTLDDLENMLNSHPEDQSNLSSSKADEYPKWAEADTPWLRLLRGALANQKRAEPDRSRRGWNRGCFGLKLDRIGSMSGLGC.

A signal peptide spans methionine 1–alanine 22. Residues arginine 23–arginine 104 constitute a propeptide that is removed on maturation. A disulfide bridge links cysteine 110 with cysteine 126.

The protein belongs to the natriuretic peptide family.

The protein resides in the secreted. In terms of biological role, exhibits natriuretic and vasodepressant activity. Has cGMP-stimulating activity. May help to regulate body fluid homeostasis in a variety of aquatic environments. This chain is C-type natriuretic peptide 1, found in Takifugu rubripes (Japanese pufferfish).